The sequence spans 393 residues: Pre-mRNA splicing factor SR-like 1 (393 aa).

The disordered stretch occupies residues M173–R393. Residues Q249–R312 are compositionally biased toward basic and acidic residues. The Nuclear localization signal signature appears at S301–D308. Residues H313 to S325 show a composition bias toward basic residues. Composition is skewed to basic and acidic residues over residues Q329–S346 and K356–I385.

It belongs to the PRP38 family. Phosphorylated. In terms of tissue distribution, mostly expressed in siliques and leaves, also present in seedlings, flowers and stems, and, at low levels, in roots.

It localises to the nucleus. Functionally, may be required for pre-mRNA splicing. Confers salt tolerance to LiCl and NaCl. This Arabidopsis thaliana (Mouse-ear cress) protein is Pre-mRNA splicing factor SR-like 1.